We begin with the raw amino-acid sequence, 369 residues long: Beta-1,4-galactosyltransferase 2 (369 aa).

Residues 1–15 (MSRLLGGTLERVCKA) are Cytoplasmic-facing. A helical; Signal-anchor for type II membrane protein transmembrane segment spans residues 16-36 (VLLLCLLHFLVAVILYFDVYA). The Lumenal segment spans residues 37–369 (QHLAFFSRFS…GQPMSWLTQG (333 aa)). The span at 58–73 (ASSSTNCSRPNATAAS) shows a compositional bias: polar residues. The disordered stretch occupies residues 58–90 (ASSSTNCSRPNATAASSGLPEVPSARPGPTAPV). N-linked (GlcNAc...) asparagine glycosylation is found at Asn63 and Asn68. Cys94 and Cys136 are disulfide-bonded. UDP-alpha-D-galactose contacts are provided by residues 147–151 (PFRHR), 186–188 (FNR), 214–215 (VD), and Trp275. The cysteines at positions 208 and 227 are disulfide-linked. Asp215 is a Mn(2+) binding site. 277 to 280 (GEDD) lines the N-acetyl-D-glucosamine pocket. A Mn(2+)-binding site is contributed by His308. 308–310 (HDR) contacts UDP-alpha-D-galactose. Arg320 contributes to the N-acetyl-D-glucosamine binding site. N-linked (GlcNAc...) asparagine glycosylation occurs at Asn354.

The protein belongs to the glycosyltransferase 7 family. Requires Mn(2+) as cofactor.

It localises to the golgi apparatus. Its subcellular location is the golgi stack membrane. The enzyme catalyses D-glucose + UDP-alpha-D-galactose = lactose + UDP + H(+). It catalyses the reaction an N-acetyl-beta-D-glucosaminyl derivative + UDP-alpha-D-galactose = a beta-D-galactosyl-(1-&gt;4)-N-acetyl-beta-D-glucosaminyl derivative + UDP + H(+). It carries out the reaction N-acetyl-D-glucosamine + UDP-alpha-D-galactose = beta-D-galactosyl-(1-&gt;4)-N-acetyl-D-glucosamine + UDP + H(+). It functions in the pathway protein modification; protein glycosylation. Functionally, responsible for the synthesis of complex-type N-linked oligosaccharides in many glycoproteins as well as the carbohydrate moieties of glycolipids. Can produce lactose. This Mus musculus (Mouse) protein is Beta-1,4-galactosyltransferase 2.